Here is a 94-residue protein sequence, read N- to C-terminus: MSKPNVLTQILDAVTETNTKVDSVQTQLNGLEESFQLLDGLPAQLTDLNTKISEIQSILTGDIVPDLPDSLKPKLKTQAFELDSDARRGKRSSK.

It localises to the host cytoplasm. The protein localises to the host nucleus. Functionally, plays a role in the proper virion occlusion of the polyhedra. Forms extensive fibrillar structures in both host nucleus and cytoplasm. Involved in the liberation of polyhedra from infected insect cells. The chain is Protein p10 (P10) from Lepidoptera (butterflies and moths).